We begin with the raw amino-acid sequence, 507 residues long: Dolichyl pyrophosphate Man9GlcNAc2 alpha-1,3-glucosyltransferase (507 aa).

The Cytoplasmic segment spans residues 1-2 (ME). The chain crosses the membrane as a helical span at residues 3–23 (SWTWMTVVVLLGLTVRWTVSL). Residues 24-114 (NSYSGAGKPP…SQAHKLFMRT (91 aa)) lie on the Lumenal side of the membrane. Residue Asn59 is glycosylated (N-linked (GlcNAc...) asparagine). Residues 115–135 (TVLAADLLIYIPAVLLYCYSL) form a helical membrane-spanning segment. The Cytoplasmic portion of the chain corresponds to 136-143 (KEISPKRK). The chain crosses the membrane as a helical span at residues 144-164 (IASALCILLYPGLILIDYGHF). At 165 to 172 (QYNSVSLG) the chain is on the lumenal side. Residues 173 to 193 (FALWGVLGVSCDWDLLGSLAF) form a helical membrane-spanning segment. The Cytoplasmic portion of the chain corresponds to 194-229 (CLALNYKQMELYHSLPFFCFLLGKCFKKGLRGKGSA). The helical transmembrane segment at 230–250 (LFIRIACTVVASFLLCWLPFL) threads the bilayer. Topologically, residues 251–297 (TEREHALQVVRRLFPVDRGLFEDKVANIWCSLNVFLKIKDILPRHIQ) are lumenal. A helical transmembrane segment spans residues 298 to 318 (IAISFCFTFLSLLPACIKLTV). Over 319–332 (QPSAKGFRFTLVSC) the chain is Cytoplasmic. A helical membrane pass occupies residues 333 to 353 (ALSFFLFSFQVHEKSILLVSL). Residues 354 to 361 (PVCLVLTE) are Lumenal-facing. Residues 362-382 (IPFMSTWFLLVSTFSMLPLLL) traverse the membrane as a helical segment. Topologically, residues 383 to 385 (KDQ) are cytoplasmic. The chain crosses the membrane as a helical span at residues 386-406 (LLLPSVVTVMAFLIACSTFFP). The Lumenal portion of the chain corresponds to 407–437 (MFENTSEEQLQLKSFAVSVRRHLPGFTFLPR). A helical membrane pass occupies residues 438–458 (IIQCLFLSSVITMILLTILSV). Residues 459 to 468 (TLDPPQKLPD) lie on the Cytoplasmic side of the membrane. The chain crosses the membrane as a helical span at residues 469–489 (LFSVLICFVSCVNFVFFLVYF). The Lumenal portion of the chain corresponds to 490-507 (NIVIMWDSKNGRNRKKID).

This sequence belongs to the ALG6/ALG8 glucosyltransferase family.

It is found in the endoplasmic reticulum membrane. The catalysed reaction is an alpha-D-Man-(1-&gt;2)-alpha-D-Man-(1-&gt;2)-alpha-D-Man-(1-&gt;3)-[alpha-D-Man-(1-&gt;2)-alpha-D-Man-(1-&gt;3)-[alpha-D-Man-(1-&gt;2)-alpha-D-Man-(1-&gt;6)]-alpha-D-Man-(1-&gt;6)]-beta-D-Man-(1-&gt;4)-beta-D-GlcNAc-(1-&gt;4)-alpha-D-GlcNAc-diphospho-di-trans,poly-cis-dolichol + a di-trans,poly-cis-dolichyl beta-D-glucosyl phosphate = an alpha-D-Glc-(1-&gt;3)-alpha-D-Man-(1-&gt;2)-alpha-D-Man-(1-&gt;2)-alpha-D-Man-(1-&gt;3)-[alpha-D-Man-(1-&gt;2)-alpha-D-Man-(1-&gt;3)-[alpha-D-Man-(1-&gt;2)-alpha-D-Man-(1-&gt;6)]-alpha-D-Man-(1-&gt;6)]-beta-D-Man-(1-&gt;4)-beta-D-GlcNAc-(1-&gt;4)-alpha-D-GlcNAc-diphospho-di-trans,poly-cis-dolichol + a di-trans,poly-cis-dolichyl phosphate + H(+). It functions in the pathway protein modification; protein glycosylation. Functionally, dolichyl pyrophosphate Man9GlcNAc2 alpha-1,3-glucosyltransferase that operates in the biosynthetic pathway of dolichol-linked oligosaccharides, the glycan precursors employed in protein asparagine (N)-glycosylation. The assembly of dolichol-linked oligosaccharides begins on the cytosolic side of the endoplasmic reticulum membrane and finishes in its lumen. The sequential addition of sugars to dolichol pyrophosphate produces dolichol-linked oligosaccharides containing fourteen sugars, including two GlcNAcs, nine mannoses and three glucoses. Once assembled, the oligosaccharide is transferred from the lipid to nascent proteins by oligosaccharyltransferases. In the lumen of the endoplasmic reticulum, adds the first glucose residue from dolichyl phosphate glucose (Dol-P-Glc) onto the lipid-linked oligosaccharide intermediate Man(9)GlcNAc(2)-PP-Dol to produce Glc(1)Man(9)GlcNAc(2)-PP-Dol. Glc(1)Man(9)GlcNAc(2)-PP-Dol is a substrate for ALG8, the following enzyme in the biosynthetic pathway. This Rattus norvegicus (Rat) protein is Dolichyl pyrophosphate Man9GlcNAc2 alpha-1,3-glucosyltransferase.